Here is a 179-residue protein sequence, read N- to C-terminus: Ribosome maturation factor RimM (179 aa).

One can recognise a PRC barrel domain in the interval 102–179 (DGEYYWYQLE…EMKVDWDADF (78 aa)).

Belongs to the RimM family. In terms of assembly, binds ribosomal protein uS19.

It localises to the cytoplasm. An accessory protein needed during the final step in the assembly of 30S ribosomal subunit, possibly for assembly of the head region. Essential for efficient processing of 16S rRNA. May be needed both before and after RbfA during the maturation of 16S rRNA. It has affinity for free ribosomal 30S subunits but not for 70S ribosomes. This chain is Ribosome maturation factor RimM, found in Pseudomonas savastanoi pv. phaseolicola (strain 1448A / Race 6) (Pseudomonas syringae pv. phaseolicola (strain 1448A / Race 6)).